A 68-amino-acid polypeptide reads, in one-letter code: Beta-defensin 1 (68 aa).

The signal sequence occupies residues 1–21 (MRTSYLLLFTLCLLLSEMASG). Positions 22–32 (DNFLTGLGHRS) are excised as a propeptide. Cystine bridges form between C37–C66, C44–C59, and C49–C67.

The protein belongs to the beta-defensin family. Monomer. Homodimer.

Its subcellular location is the secreted. It is found in the membrane. In terms of biological role, has bactericidal activity. May act as a ligand for C-C chemokine receptor CCR6. Positively regulates the sperm motility and bactericidal activity in a CCR6-dependent manner. Binds to CCR6 and triggers Ca2+ mobilization in the sperm which is important for its motility. The sequence is that of Beta-defensin 1 (DEFB1) from Cercopithecus erythrogaster (Red-bellied monkey).